Reading from the N-terminus, the 823-residue chain is NAD-dependent histone deacetylase sirtuin-1 (823 aa).

A compositionally biased stretch (low complexity) spans 41–67; sequence LASTSTEAEAEAEATATTTEPATSELA. The interval 41 to 146 is disordered; sequence LASTSTEAEA…SSSNCSSSVE (106 aa). Basic and acidic residues predominate over residues 72–95; it reads GEIKTKTLAAREEQEIGANLEHKT. The span at 104 to 137 shows a compositional bias: acidic residues; that stretch reads EDEDDEEEEEEDDEEEEEDDEEGITGTSNEDEDS. The region spanning 204–499 is the Deacetylase sirtuin-type domain; it reads KLASVNTFDD…LCCDESVLTE (296 aa). NAD(+) contacts are provided by residues 229-248 and 313-316; these read GAGV…NGIY and QNID. His331 acts as the Proton acceptor in catalysis. Zn(2+) contacts are provided by Cys339, Cys342, Cys363, and Cys366. NAD(+)-binding positions include 427 to 429, 452 to 454, and Ser469; these read GSS and NRE. Phosphoserine is present on residues Ser618 and Ser621. Over residues 698 to 707 the composition is skewed to acidic residues; it reads DYSDDDDEEE. 2 disordered regions span residues 698–722 and 777–823; these read DYSD…GNVG and IIEQ…LAAV. The span at 798-813 shows a compositional bias: basic and acidic residues; that stretch reads PSEENKQQTQIERSEE. Residues 814–823 show a composition bias toward pro residues; it reads SPPPGQLAAV.

Belongs to the sirtuin family. Class I subfamily. In terms of assembly, interacts with the transcriptional repressors hairy (hry) and deadpan (dpn); via basic domains. Associates with the Esc/E(z) histone methyltransferase complex. Interacts directly with E(z) and HDAC1/Rpd3. Zn(2+) is required as a cofactor.

The protein localises to the cytoplasm. The protein resides in the nucleus. Its subcellular location is the chromosome. The catalysed reaction is N(6)-acetyl-L-lysyl-[protein] + NAD(+) + H2O = 2''-O-acetyl-ADP-D-ribose + nicotinamide + L-lysyl-[protein]. In terms of biological role, NAD-dependent histone deacetylase involved in heterochromatic silencing. Mildly suppresses the heterochromatin-mediated silencing phenomenon known as position-effect variegation (PEV). Required for epigenetic silencing of the polycomb group proteins. Has histone H4 deacetylase activity in vitro. Required maternally for establishing proper segmentation of the embryo. Involved in sex determination. May be involved in the regulation of life span. This chain is NAD-dependent histone deacetylase sirtuin-1, found in Drosophila melanogaster (Fruit fly).